We begin with the raw amino-acid sequence, 993 residues long: General transcription factor II-I repeat domain-containing protein 1 (993 aa).

GTF2I-like repeat units lie at residues 117 to 211 and 332 to 426; these read LGPT…EPKS and LRET…DGTT. Residues 461 to 480 form a disordered region; it reads GSRSEKSSISDECEPGTSSE. GTF2I-like repeat units lie at residues 597 to 691, 727 to 821, and 824 to 918; these read DGIG…LEDC, LSRI…RPDD, and ANRL…ICSE. The interval 916–961 is disordered; the sequence is CSEPPKIKNGNTGPKRKRKRVSEGNSISSASSNCSSSSSSSSNMDP. Positions 929–936 match the Nuclear localization signal motif; the sequence is PKRKRKRV. Positions 938-961 are enriched in low complexity; sequence EGNSISSASSNCSSSSSSSSNMDP.

It belongs to the TFII-I family. As to quaternary structure, interacts (via repeats 4-5) with foxh1/fast1 (via Fork-head domain). Interacts with smad2 and smad3 (via MH1 domain) in a ligand (activin)-dependent manner. Interacts with pou5f1.1/oct-25 to form a repression complex on the promoters of the gsc and mix2 genes. In terms of tissue distribution, uniformly expressed in the embryo in pre- and early gastrula stages. Enriched in the head region of early neurula through tailbud stages.

It is found in the nucleus. Its function is as follows. Transcription factor that activates a subset of organizer-specific genes. Binds to the distal element (DE) of the gsc promoter to regulate its expression. In the presence of pou5f1.1/oct-25, forms a repression complex on the promoter of the gsc and mix2 genes to inhibit their transcription. This is General transcription factor II-I repeat domain-containing protein 1 (gtf2ird1) from Xenopus laevis (African clawed frog).